The following is a 386-amino-acid chain: UDP-N-acetylbacillosamine transaminase (386 aa).

Substrate is bound by residues 25–28 (NYIA), alanine 56, and serine 179. Lysine 184 is modified (N6-(pyridoxal phosphate)lysine). Substrate is bound by residues asparagine 227 and 325–328 (QIET).

It belongs to the DegT/DnrJ/EryC1 family. Requires pyridoxal 5'-phosphate as cofactor.

The enzyme catalyses UDP-N-acetylbacillosamine + 2-oxoglutarate = UDP-2-acetamido-2,6-dideoxy-alpha-D-xylo-hex-4-ulose + L-glutamate. The protein operates within protein modification; protein glycosylation. Its function is as follows. Aminotransferase involved in the bacillosamine biosynthesis pathway by producing UDP-4-amino-4,6-dideoxy-alpha-D-GlcNAc (UDP-2-acetamido-4-amino-2,4,6-trideoxy-alpha-D-glucopyranose), a precursor used in the production of the glycan component 2,4-diacetamido-2,4,6-trideoxy-alpha-D-glucopyranose. Required for host colonization and virulence. Involved in the N-linked protein glycosylation pathway. The protein is UDP-N-acetylbacillosamine transaminase (pglE) of Campylobacter jejuni subsp. jejuni serotype O:2 (strain ATCC 700819 / NCTC 11168).